The following is a 255-amino-acid chain: Small ribosomal subunit protein eS1 (255 aa).

N-acetylalanine; partial is present on alanine 2.

Belongs to the eukaryotic ribosomal protein eS1 family. Component of the small ribosomal subunit. Mature ribosomes consist of a small (40S) and a large (60S) subunit. The 40S subunit contains about 33 different proteins and 1 molecule of RNA (18S). The 60S subunit contains about 49 different proteins and 3 molecules of RNA (25S, 5.8S and 5S).

It localises to the cytoplasm. This chain is Small ribosomal subunit protein eS1, found in Arthroderma otae (strain ATCC MYA-4605 / CBS 113480) (Microsporum canis).